Here is a 397-residue protein sequence, read N- to C-terminus: MKEKVVLAYSGGLDTSIIIPWLKENYDLDVIAVCVNVGQGDDMDYVKTKAIKSGASKIYVEDVKEEFVVDYLYKAIKSEALYEQDYMLGTSFARPLMAKKLVEIAHKEQAKYICHGCTGKGNDQVRFEVGVKAQDPIIKIIAPWRIWDIKSREDAIDYAKKVGVEVPVTKKKIYSVDKNLWHVSHEGGDLEDLKNEHKEDMYFMVTPPEKAKNEPTYLEIYFEKGAPVKINGEVLNPVDIIDKLNTIGGENGIGIADIIENRLVGMKSRGIYETPAGTLLYAAHKKLESVTLDKYTYQYKKIVSAQYGELVYNGLWFTSLREAIDAFVDKTQENVTGTVQLKLYKGNIKPCSVDTEYALYDEGISSFGESELYSHKDAEGFINLFGLPSKIKALKNF.

8–16 (AYSGGLDTS) is an ATP binding site. The L-citrulline site is built by Y86 and S91. G116 contributes to the ATP binding site. L-aspartate is bound by residues T118, N122, and D123. Residue N122 participates in L-citrulline binding. Positions 126, 175, 184, 260, and 272 each coordinate L-citrulline.

This sequence belongs to the argininosuccinate synthase family. Type 1 subfamily. As to quaternary structure, homotetramer.

Its subcellular location is the cytoplasm. It carries out the reaction L-citrulline + L-aspartate + ATP = 2-(N(omega)-L-arginino)succinate + AMP + diphosphate + H(+). Its pathway is amino-acid biosynthesis; L-arginine biosynthesis; L-arginine from L-ornithine and carbamoyl phosphate: step 2/3. The polypeptide is Argininosuccinate synthase (Clostridium botulinum (strain Kyoto / Type A2)).